The chain runs to 592 residues: Syntaxin-binding protein 3 (592 aa).

A mediates interaction with DOC2B region spans residues 1–255 (MAPPVSERGL…STVLHELTFQ (255 aa)).

Belongs to the STXBP/unc-18/SEC1 family. In terms of assembly, interacts with STX4. Interacts with DOC2B; the interaction is direct, occurs at the cell membrane, excludes interaction with STX4 and regulates glucose-stimulated insulin secretion. Post-translationally, phosphorylated by PKC in platelets in response to thrombin stimulation; phosphorylation inhibits binding to STX4. In terms of tissue distribution, ubiquitously expressed in all tissues tested.

The protein resides in the cytoplasm. The protein localises to the cytosol. It localises to the cell membrane. Together with STX4 and VAMP2, may play a role in insulin-dependent movement of GLUT4 and in docking/fusion of intracellular GLUT4-containing vesicles with the cell surface in adipocytes. The sequence is that of Syntaxin-binding protein 3 (Stxbp3) from Mus musculus (Mouse).